A 288-amino-acid chain; its full sequence is MKYVFIEKHQAEFSIKAMCRVLRVARSGWYTWCQRRTRISTRQQFRQHCDSVVLAAFTRSKQRYGAPRLTDELRAQGYPFNVKTVAASLRRQGLRAKASRKFSPVSYRAHGLPVSENLLEQDFYASGPNQKWAGDITYLRTDEGWLYLAVVIDLWSRAVIGWSMSPRMTAQLACDALQMALWRRKRPRNVIVHTDRGGQYCSADYQAQLKRHNLRGSMSAKGCCYDNACVESFFHSLKVECIHGEHFISREIMRATVFNYIECDYNRWRRHSWCGGLSPEQFENKNLA.

Residues 124-287 form the Integrase catalytic domain; that stretch reads YASGPNQKWA…SPEQFENKNL (164 aa).

It belongs to the transposase IS3/IS150/IS904 family.

Involved in the transposition of the insertion sequence IS3. This is Transposase InsF for insertion sequence IS3A (insF1) from Escherichia coli (strain K12).